A 158-amino-acid polypeptide reads, in one-letter code: NAD(P)H-quinone oxidoreductase subunit N (158 aa).

This sequence belongs to the complex I NdhN subunit family. In terms of assembly, NDH-1 can be composed of about 15 different subunits; different subcomplexes with different compositions have been identified which probably have different functions.

It is found in the cellular thylakoid membrane. It carries out the reaction a plastoquinone + NADH + (n+1) H(+)(in) = a plastoquinol + NAD(+) + n H(+)(out). The enzyme catalyses a plastoquinone + NADPH + (n+1) H(+)(in) = a plastoquinol + NADP(+) + n H(+)(out). Functionally, NDH-1 shuttles electrons from an unknown electron donor, via FMN and iron-sulfur (Fe-S) centers, to quinones in the respiratory and/or the photosynthetic chain. The immediate electron acceptor for the enzyme in this species is believed to be plastoquinone. Couples the redox reaction to proton translocation, and thus conserves the redox energy in a proton gradient. Cyanobacterial NDH-1 also plays a role in inorganic carbon-concentration. The sequence is that of NAD(P)H-quinone oxidoreductase subunit N from Crocosphaera subtropica (strain ATCC 51142 / BH68) (Cyanothece sp. (strain ATCC 51142)).